The primary structure comprises 92 residues: uncharacterized protein (92 aa).

Residues 65-86 (AVWIFWLCFLVSGLSRAFLVYF) traverse the membrane as a helical segment.

It is found in the membrane. This is an uncharacterized protein from Treponema pallidum (strain Nichols).